We begin with the raw amino-acid sequence, 241 residues long: Nicotinamide riboside kinase (241 aa).

21–29 lines the ATP pocket; the sequence is GCSSSGKST. Residues Ser-28 and Asp-47 each coordinate Mg(2+). The Proton acceptor role is filled by Asp-47. Substrate contacts are provided by residues 47–50, 67–68, and Asp-68; these read DDFY and WD. Arg-163 lines the ATP pocket. Arg-164 is a binding site for substrate. Residues Arg-167, 167 to 169, and 213 to 215 contribute to the ATP site; these read RGG and DVQ. 169–170 provides a ligand contact to substrate; it reads GY.

It belongs to the uridine kinase family. NRK subfamily.

It catalyses the reaction beta-nicotinamide D-riboside + ATP = beta-nicotinamide D-ribonucleotide + ADP + H(+). The enzyme catalyses beta-D-ribosylnicotinate + ATP = nicotinate beta-D-ribonucleotide + ADP + H(+). The protein operates within cofactor biosynthesis; NAD(+) biosynthesis. Catalyzes the phosphorylation of nicotinamide riboside (NR) and nicotinic acid riboside (NaR) to form nicotinamide mononucleotide (NMN) and nicotinic acid mononucleotide (NaMN). This is Nicotinamide riboside kinase (NRK1) from Eremothecium gossypii (strain ATCC 10895 / CBS 109.51 / FGSC 9923 / NRRL Y-1056) (Yeast).